A 277-amino-acid polypeptide reads, in one-letter code: MNVFTTLQQFVPQQKISKVAGRLAASRHPWVKRTFIRSFAKAYDVSLDEYERQSLNAYESFNDFFTRELQDNARIIDASINGIVSPADGMISQLGQIHDHKLLQAKGRDYDIGQLLADSADGDYFADGSFATVYLAPSNYHRVHMPFDGTLIKTRYVPGTLFSVNNTTAANVPDLFARNERLVCLFDTAYGKAAVVMVGAMIVAGIETVATGKISRTDDIQEADHDMSFKKGDELGRFYLGSTAIVVLPKAAKTEWQATMQHGSTVQMGQLLANAKI.

Residues Asp-88, His-144, and Ser-242 each act as charge relay system; for autoendoproteolytic cleavage activity in the active site. Ser-242 (schiff-base intermediate with substrate; via pyruvic acid; for decarboxylase activity) is an active-site residue. Position 242 is a pyruvic acid (Ser); by autocatalysis (Ser-242).

Belongs to the phosphatidylserine decarboxylase family. PSD-B subfamily. Prokaryotic type I sub-subfamily. In terms of assembly, heterodimer of a large membrane-associated beta subunit and a small pyruvoyl-containing alpha subunit. Pyruvate is required as a cofactor. Post-translationally, is synthesized initially as an inactive proenzyme. Formation of the active enzyme involves a self-maturation process in which the active site pyruvoyl group is generated from an internal serine residue via an autocatalytic post-translational modification. Two non-identical subunits are generated from the proenzyme in this reaction, and the pyruvate is formed at the N-terminus of the alpha chain, which is derived from the carboxyl end of the proenzyme. The autoendoproteolytic cleavage occurs by a canonical serine protease mechanism, in which the side chain hydroxyl group of the serine supplies its oxygen atom to form the C-terminus of the beta chain, while the remainder of the serine residue undergoes an oxidative deamination to produce ammonia and the pyruvoyl prosthetic group on the alpha chain. During this reaction, the Ser that is part of the protease active site of the proenzyme becomes the pyruvoyl prosthetic group, which constitutes an essential element of the active site of the mature decarboxylase.

Its subcellular location is the cell membrane. It carries out the reaction a 1,2-diacyl-sn-glycero-3-phospho-L-serine + H(+) = a 1,2-diacyl-sn-glycero-3-phosphoethanolamine + CO2. Its pathway is phospholipid metabolism; phosphatidylethanolamine biosynthesis; phosphatidylethanolamine from CDP-diacylglycerol: step 2/2. In terms of biological role, catalyzes the formation of phosphatidylethanolamine (PtdEtn) from phosphatidylserine (PtdSer). In Psychrobacter arcticus (strain DSM 17307 / VKM B-2377 / 273-4), this protein is Phosphatidylserine decarboxylase proenzyme.